A 390-amino-acid polypeptide reads, in one-letter code: Alkanesulfonate monooxygenase 1 (390 aa).

Residues 364 to 390 (TGSSVNTGPFGETIAGDHRPKSLASAS) are disordered.

This sequence belongs to the SsuD family.

The catalysed reaction is an alkanesulfonate + FMNH2 + O2 = an aldehyde + FMN + sulfite + H2O + 2 H(+). In terms of biological role, catalyzes the desulfonation of aliphatic sulfonates. In Mesorhizobium japonicum (strain LMG 29417 / CECT 9101 / MAFF 303099) (Mesorhizobium loti (strain MAFF 303099)), this protein is Alkanesulfonate monooxygenase 1 (ssuD1).